A 514-amino-acid polypeptide reads, in one-letter code: RNA polymerase sigma factor SigA (514 aa).

The segment covering 135–159 (AAKKATAKKAAAKKTTAKKTAAKKS) has biased composition (basic residues). Residues 135–205 (AAKKATAKKA…SDDDEDDAPA (71 aa)) form a disordered region. Positions 281–351 (LLEANLRLVV…TRAMADQART (71 aa)) are sigma-70 factor domain-2. An Interaction with polymerase core subunit RpoC motif is present at residues 305-308 (DLIQ). The tract at residues 360-436 (EVINKLARVQ…DSEAVVPADA (77 aa)) is sigma-70 factor domain-3. The tract at residues 449–502 (VLDTLSEREAGVVSMRFGLTDGQPKTLDEIGKVYGVTRERIRQIESKTMSKLRH) is sigma-70 factor domain-4. The segment at residues 475–494 (LDEIGKVYGVTRERIRQIES) is a DNA-binding region (H-T-H motif).

It belongs to the sigma-70 factor family. RpoD/SigA subfamily. In terms of assembly, interacts transiently with the RNA polymerase catalytic core.

The protein resides in the cytoplasm. Its function is as follows. Sigma factors are initiation factors that promote the attachment of RNA polymerase to specific initiation sites and are then released. This sigma factor is the primary sigma factor during exponential growth. The sequence is that of RNA polymerase sigma factor SigA from Streptomyces griseus.